A 220-amino-acid polypeptide reads, in one-letter code: Nitrile hydratase subunit beta (220 aa).

Belongs to the nitrile hydratase subunit beta family. Heterodimer of an alpha and a beta chain.

The catalysed reaction is an aliphatic primary amide = an aliphatic nitrile + H2O. NHase catalyzes the hydration of various nitrile compounds to the corresponding amides. The polypeptide is Nitrile hydratase subunit beta (nthB) (Pseudomonas chlororaphis (Pseudomonas aureofaciens)).